A 37-amino-acid chain; its full sequence is U4-theraphotoxin-Hhn1v (37 aa).

Cystine bridges form between Cys3-Cys17, Cys7-Cys28, and Cys22-Cys33.

It belongs to the neurotoxin 12 (Hwtx-2) family. 02 (Hwtx-2) subfamily. As to expression, expressed by the venom gland.

The protein resides in the secreted. Its function is as follows. Postsynaptic neurotoxin. The chain is U4-theraphotoxin-Hhn1v from Cyriopagopus hainanus (Chinese bird spider).